A 144-amino-acid polypeptide reads, in one-letter code: Tryparedoxin (144 aa).

Positions 2–144 (SGLAKYLPGA…PDGANFPWPN (143 aa)) constitute a Thioredoxin domain. Cys-40 and Cys-43 are joined by a disulfide.

It belongs to the thioredoxin family.

Functionally, acts as a thiol-disulfide oxidoreductase. It is spontaneously reduced by trypanothione. This chain is Tryparedoxin, found in Trypanosoma brucei brucei.